A 739-amino-acid chain; its full sequence is Phosphoribosylformylglycinamidine synthase subunit PurL (739 aa).

The active site involves His52. ATP contacts are provided by Tyr55 and Lys94. Residue Glu96 coordinates Mg(2+). Substrate is bound by residues 97–100 and Arg119; that span reads SHNH. The active-site Proton acceptor is the His98. Mg(2+) is bound at residue Asp120. A substrate-binding site is contributed by Gln243. Asp273 is a Mg(2+) binding site. Residue 317–319 coordinates substrate; it reads ESQ. The ATP site is built by Asp500 and Gly537. Position 538 (Asn538) interacts with Mg(2+). A substrate-binding site is contributed by Ser540.

Belongs to the FGAMS family. In terms of assembly, monomer. Part of the FGAM synthase complex composed of 1 PurL, 1 PurQ and 2 PurS subunits.

The protein resides in the cytoplasm. The enzyme catalyses N(2)-formyl-N(1)-(5-phospho-beta-D-ribosyl)glycinamide + L-glutamine + ATP + H2O = 2-formamido-N(1)-(5-O-phospho-beta-D-ribosyl)acetamidine + L-glutamate + ADP + phosphate + H(+). The protein operates within purine metabolism; IMP biosynthesis via de novo pathway; 5-amino-1-(5-phospho-D-ribosyl)imidazole from N(2)-formyl-N(1)-(5-phospho-D-ribosyl)glycinamide: step 1/2. Its function is as follows. Part of the phosphoribosylformylglycinamidine synthase complex involved in the purines biosynthetic pathway. Catalyzes the ATP-dependent conversion of formylglycinamide ribonucleotide (FGAR) and glutamine to yield formylglycinamidine ribonucleotide (FGAM) and glutamate. The FGAM synthase complex is composed of three subunits. PurQ produces an ammonia molecule by converting glutamine to glutamate. PurL transfers the ammonia molecule to FGAR to form FGAM in an ATP-dependent manner. PurS interacts with PurQ and PurL and is thought to assist in the transfer of the ammonia molecule from PurQ to PurL. The sequence is that of Phosphoribosylformylglycinamidine synthase subunit PurL from Enterococcus faecalis (strain ATCC 700802 / V583).